The sequence spans 32 residues: Secreted protein F2 (32 aa).

It is found in the secreted. This is Secreted protein F2 from Globisporangium hypogynum (Pythium hypogynum).